We begin with the raw amino-acid sequence, 1341 residues long: Pleckstrin homology domain-containing family G member 3 (1341 aa).

The disordered stretch occupies residues M1–W68. A compositionally biased stretch (low complexity) spans S18–S29. 2 stretches are compositionally biased toward polar residues: residues S42–G51 and P59–W68. S76 carries the post-translational modification Phosphoserine. The 180-residue stretch at Y93–M272 folds into the DH domain. A PH domain is found at D296–L394. Phosphoserine is present on residues S433 and S502. Residues S433–R482 are disordered. 2 disordered regions span residues D508–E657 and P684–P715. 2 stretches are compositionally biased toward acidic residues: residues E529–E541 and G570–S580. Phosphoserine is present on residues S571, S694, S695, S737, S759, S762, and S766. Residues S695–Q707 are compositionally biased toward acidic residues. Residues S775–T832 form a disordered region. The segment covering N798–A810 has biased composition (polar residues). Over residues E817–T832 the composition is skewed to basic and acidic residues. A phosphoserine mark is found at S862, S899, S900, and S947. Disordered regions lie at residues S876–P930, E939–N958, K1071–K1097, and H1117–T1162. Over residues E939–P948 the composition is skewed to basic and acidic residues. Over residues R949–N958 the composition is skewed to polar residues. Phosphoserine occurs at positions 1129, 1134, 1136, 1141, 1155, 1158, and 1201. Positions F1135–T1162 are enriched in polar residues. Disordered regions lie at residues E1204–G1249 and K1271–G1341. Over residues Q1309–D1320 the composition is skewed to basic and acidic residues.

It is found in the cytoplasm. The protein resides in the cytoskeleton. Plays a role in controlling cell polarity and cell motility by selectively binding newly polymerized actin and activating RAC1 and CDC42 to enhance local actin polymerization. The sequence is that of Pleckstrin homology domain-containing family G member 3 from Mus musculus (Mouse).